The following is a 196-amino-acid chain: Putative NADH dehydrogenase/NAD(P)H nitroreductase Pnuc_0932 (196 aa).

The protein belongs to the nitroreductase family. HadB/RutE subfamily. FMN serves as cofactor.

This is Putative NADH dehydrogenase/NAD(P)H nitroreductase Pnuc_0932 from Polynucleobacter asymbioticus (strain DSM 18221 / CIP 109841 / QLW-P1DMWA-1) (Polynucleobacter necessarius subsp. asymbioticus).